Here is a 33-residue protein sequence, read N- to C-terminus: Cytochrome b6-f complex subunit 8 (33 aa).

The helical transmembrane segment at 2-22 threads the bilayer; that stretch reads IFTLGWASLAAIFTFSIAMVV.

The protein belongs to the PetN family. The 4 large subunits of the cytochrome b6-f complex are cytochrome b6, subunit IV (17 kDa polypeptide, PetD), cytochrome f and the Rieske protein, while the 4 small subunits are PetG, PetL, PetM and PetN. The complex functions as a dimer.

The protein localises to the cellular thylakoid membrane. Component of the cytochrome b6-f complex, which mediates electron transfer between photosystem II (PSII) and photosystem I (PSI), cyclic electron flow around PSI, and state transitions. This Prochlorococcus marinus (strain NATL2A) protein is Cytochrome b6-f complex subunit 8.